Consider the following 335-residue polypeptide: tRNA N6-adenosine threonylcarbamoyltransferase (335 aa).

Residues His-109, His-113, and Tyr-130 each contribute to the a divalent metal cation site. Substrate contacts are provided by residues 130-134, Asp-162, Gly-177, Glu-181, and Asn-266; that span reads YVSGG. Asp-294 serves as a coordination point for a divalent metal cation.

Belongs to the KAE1 / TsaD family. Component of the EKC/KEOPS complex composed of at least GON7, TP53RK, TPRKB, OSGEP and LAGE3; the whole complex dimerizes. Interacts with PRAME. A divalent metal cation serves as cofactor. In terms of tissue distribution, widely expressed at low level. Expressed in heart, placenta, liver, kidney, lung, brain, skeletal muscle and pancreas.

It is found in the cytoplasm. The protein localises to the nucleus. The enzyme catalyses L-threonylcarbamoyladenylate + adenosine(37) in tRNA = N(6)-L-threonylcarbamoyladenosine(37) in tRNA + AMP + H(+). Its function is as follows. Component of the EKC/KEOPS complex that is required for the formation of a threonylcarbamoyl group on adenosine at position 37 (t(6)A37) in tRNAs that read codons beginning with adenine. The complex is probably involved in the transfer of the threonylcarbamoyl moiety of threonylcarbamoyl-AMP (TC-AMP) to the N6 group of A37. OSGEP likely plays a direct catalytic role in this reaction, but requires other protein(s) of the complex to fulfill this activity. The sequence is that of tRNA N6-adenosine threonylcarbamoyltransferase from Homo sapiens (Human).